A 201-amino-acid polypeptide reads, in one-letter code: Glutathione peroxidase 1 (201 aa).

Phosphoserine is present on serine 32. Selenocysteine 47 is an active-site residue. A non-standard amino acid (selenocysteine) is located at residue selenocysteine 47. An N6-acetyllysine; alternate mark is found at lysine 86, lysine 112, and lysine 146. N6-succinyllysine; alternate occurs at positions 86, 112, and 146. Phosphoserine occurs at positions 195 and 199.

Belongs to the glutathione peroxidase family. In terms of assembly, homotetramer. Interacts with MIEN1. In terms of processing, during periods of oxidative stress, Sec-47 may react with a superoxide radical, irreversibly lose hydroselenide and be converted to dehydroalanine.

The protein localises to the cytoplasm. The protein resides in the mitochondrion. It carries out the reaction 2 glutathione + H2O2 = glutathione disulfide + 2 H2O. The enzyme catalyses a hydroperoxy polyunsaturated fatty acid + 2 glutathione = a hydroxy polyunsaturated fatty acid + glutathione disulfide + H2O. The catalysed reaction is tert-butyl hydroperoxide + 2 glutathione = tert-butanol + glutathione disulfide + H2O. It catalyses the reaction cumene hydroperoxide + 2 glutathione = 2-phenylpropan-2-ol + glutathione disulfide + H2O. It carries out the reaction (13S)-hydroperoxy-(9Z,11E)-octadecadienoate + 2 glutathione = (13S)-hydroxy-(9Z,11E)-octadecadienoate + glutathione disulfide + H2O. The enzyme catalyses (9S)-hydroperoxy-(10E,12Z)-octadecadienoate + 2 glutathione = (9S)-hydroxy-(10E,12Z)-octadecadienoate + glutathione disulfide + H2O. The catalysed reaction is (5S)-hydroperoxy-(6E,8Z,11Z,14Z)-eicosatetraenoate + 2 glutathione = (5S)-hydroxy-(6E,8Z,11Z,14Z)-eicosatetraenoate + glutathione disulfide + H2O. It catalyses the reaction (12S)-hydroperoxy-(5Z,8Z,10E,14Z)-eicosatetraenoate + 2 glutathione = (12S)-hydroxy-(5Z,8Z,10E,14Z)-eicosatetraenoate + glutathione disulfide + H2O. It carries out the reaction (12R)-hydroperoxy-(5Z,8Z,10E,14Z)-eicosatetraenoate + 2 glutathione = (12R)-hydroxy-(5Z,8Z,10E,14Z)-eicosatetraenoate + glutathione disulfide + H2O. The enzyme catalyses (15S)-hydroperoxy-(5Z,8Z,11Z,13E)-eicosatetraenoate + 2 glutathione = (15S)-hydroxy-(5Z,8Z,11Z,13E)-eicosatetraenoate + glutathione disulfide + H2O. The catalysed reaction is (5S)-hydroperoxy-(6E,8Z,11Z,14Z,17Z)-eicosapentaenoate + 2 glutathione = (5S)-hydroxy-(6E,8Z,11Z,14Z,17Z)-eicosapentaenoate + glutathione disulfide + H2O. It catalyses the reaction (12S)-hydroperoxy-(5Z,8Z,10E,14Z,17Z)-eicosapentaenoate + 2 glutathione = (12S)-hydroxy-(5Z,8Z,10E,14Z,17Z)-eicosapentaenoate + glutathione disulfide + H2O. It carries out the reaction (15S)-hydroperoxy-(5Z,8Z,11Z,13E,17Z)-eicosapentaenoate + 2 glutathione = (15S)-hydroxy-(5Z,8Z,11Z,13E,17Z)-eicosapentaenoate + glutathione disulfide + H2O. The enzyme catalyses (15S)-hydroperoxy-(11Z,13E)-eicosadienoate + 2 glutathione = (15S)-hydroxy-(11Z,13E)-eicosadienoate + glutathione disulfide + H2O. The catalysed reaction is (17S)-hydroperoxy-(4Z,7Z,10Z,13Z,15E,19Z)-docosahexaenoate + 2 glutathione = (17S)-hydroxy-(4Z,7Z,10Z,13Z,15E,19Z)-docosahexaenoate + glutathione disulfide + H2O. In terms of biological role, catalyzes the reduction of hydroperoxides in a glutathione-dependent manner thus regulating cellular redox homeostasis. Can reduce small soluble hydroperoxides such as H2O2, cumene hydroperoxide and tert-butyl hydroperoxide, as well as several fatty acid-derived hydroperoxides. In platelets catalyzes the reduction of 12-hydroperoxyeicosatetraenoic acid, the primary product of the arachidonate 12-lipoxygenase pathway. The sequence is that of Glutathione peroxidase 1 (GPX1) from Callithrix jacchus (White-tufted-ear marmoset).